The sequence spans 28 residues: Omega-conotoxin-like CnVIIH (28 aa).

3 cysteine pairs are disulfide-bonded: Cys-1–Cys-16, Cys-8–Cys-20, and Cys-15–Cys-27. Pro-7 bears the 4-hydroxyproline; partial mark. At Met-12 the chain carries Methionine sulfoxide. Cys-27 carries the post-translational modification Cysteine amide.

Belongs to the conotoxin O1 superfamily. In terms of tissue distribution, expressed by the venom duct.

The protein localises to the secreted. Omega-conotoxins act at presynaptic membranes, they bind and block voltage-gated calcium channels (Cav). This toxin blocks N-type calcium channels (Cav2.2/CACNA1B) with high potency. Unexpectedly, it does not show any blocking activity at amphibian neuromuscular junction. In vivo, when intracerebroventricularly injected into mice causes shaking activity, and, at higher doses, causes mild tremors. When injected intramuscularly into fish, it causes paralysis, and, at higher doses, causes death. This is Omega-conotoxin-like CnVIIH from Conus consors (Singed cone).